A 679-amino-acid polypeptide reads, in one-letter code: PHD finger protein PERSISTENT TAPETAL CELL 1 (679 aa).

The PHD-type zinc finger occupies Val620–Asp670.

Probable transcriptional activator required for tapetal programmed cell death (PCD) and degeneration, and pollen development in anthers. This is PHD finger protein PERSISTENT TAPETAL CELL 1 from Oryza sativa subsp. japonica (Rice).